The primary structure comprises 357 residues: MPYIGSLKVNQFRNLADVDITPHSQFNFFFGQNGAGKTSILESIYYLSVGRSFRTHLPQRLIQDNTDRFLIFITLYNGTQFIPLGVERDCHGDRCLRINGETASSWSLAAKRLPLCSLSAMSHRFLLDGPRVRRQFLDWLMFHVEPSFFSIWQRLQRSLKQRNAALKAKLPLGEITHWDKMLVEDGERLHQLRQNVVTEFKPLFTQMLQQFLPAYPLIGHYFRGWSEKYSLMEQLQINLKQDLQRGYTQAGPQRADFRLTLRDLPAQDILSQGQQKLVTYALHFAQGLLLKEKTGISPIYLIDDLPAELDANKRDCVIDLVNCLESQVFISGIDPNEIRLPPHSTLFHVKHGKVAAL.

ATP is bound at residue 31 to 38; that stretch reads GQNGAGKT.

This sequence belongs to the RecF family.

The protein resides in the cytoplasm. Functionally, the RecF protein is involved in DNA metabolism; it is required for DNA replication and normal SOS inducibility. RecF binds preferentially to single-stranded, linear DNA. It also seems to bind ATP. In Coxiella burnetii (strain CbuG_Q212) (Coxiella burnetii (strain Q212)), this protein is DNA replication and repair protein RecF.